The sequence spans 101 residues: Ascorbate-specific PTS system EIIB component (101 aa).

Residues 3–96 form the PTS EIIB type-2 domain; it reads VRILAVCGNG…KLLEVIKAHF (94 aa). Cys9 functions as the Phosphocysteine intermediate in the catalytic mechanism. Cys9 bears the Phosphocysteine mark.

It localises to the cytoplasm. It catalyses the reaction N(pros)-phospho-L-histidyl-[protein] + L-ascorbate(out) = L-ascorbate 6-phosphate(in) + L-histidyl-[protein]. Its function is as follows. The phosphoenolpyruvate-dependent sugar phosphotransferase system (sugar PTS), a major carbohydrate active transport system, catalyzes the phosphorylation of incoming sugar substrates concomitantly with their translocation across the cell membrane. The enzyme II UlaABC PTS system is involved in ascorbate transport. In Shigella sonnei (strain Ss046), this protein is Ascorbate-specific PTS system EIIB component (ulaB).